The primary structure comprises 173 residues: Copper transport protein ctr5 (173 aa).

Over 1-54 (MSLSKMSMSGMSGMGMGSSSNSSAATCRMSMLWNWYIHDSCFLAKSWHINTGNK) the chain is Extracellular. Residues 55–75 (FAGSIIGIFFFAVAIEGLSLV) form a helical membrane-spanning segment. At 76-135 (QRMFDRWIVAHSNGKTLSGPLRIFFPSSTVHVTVWQQLIRAAMYSSFYLSATILMLIVMS) the chain is on the cytoplasmic side. Residues 136-156 (FNGYAILFGFVGAWIGFFLFA) form a helical membrane-spanning segment. The Extracellular segment spans residues 157–173 (SDTYGTPSTGTGCCESR).

Belongs to the copper transporter (Ctr) (TC 1.A.56) family. SLC31A subfamily. In terms of assembly, interacts with ctr4.

It is found in the membrane. Its function is as follows. Required for high affinity copper (probably reduced Cu I) transport into the cell. The protein is Copper transport protein ctr5 (ctr5) of Schizosaccharomyces pombe (strain 972 / ATCC 24843) (Fission yeast).